Consider the following 237-residue polypeptide: MNNLIKGISNVTLRCVSQTSATSTSLFYIPSITRCLTKKCYGNKSTTILNSRINNNNNVNIRQQSTTAASTNIFQQALKETKQEQGEEKVKVEDNKIVRVSLQKLGYSEWKLMALFKALSGLSLREAMAQLSFTEHSPSKKLRGLIKHAAHVAENIKGMDPERLIISQIWAGRSFYKRSIMWKGRGQGSTIRKPFCHVSVEIKESEFKDGEKKVGKFGKTNKTFSKYDGNFDHTKEY.

Belongs to the universal ribosomal protein uL22 family.

The protein localises to the mitochondrion. In Dictyostelium discoideum (Social amoeba), this protein is Large ribosomal subunit protein uL22m (mrpl22).